The sequence spans 335 residues: Malate dehydrogenase (335 aa).

11–17 (GAAGQIG) provides a ligand contact to NAD(+). Substrate contacts are provided by Arg-94 and Arg-100. Residues Asn-107, Gln-114, and 131 to 133 (VGN) each bind NAD(+). 2 residues coordinate substrate: Asn-133 and Arg-167. His-192 functions as the Proton acceptor in the catalytic mechanism.

It belongs to the LDH/MDH superfamily. MDH type 2 family.

It carries out the reaction (S)-malate + NAD(+) = oxaloacetate + NADH + H(+). Catalyzes the reversible oxidation of malate to oxaloacetate. This is Malate dehydrogenase from Bdellovibrio bacteriovorus (strain ATCC 15356 / DSM 50701 / NCIMB 9529 / HD100).